Consider the following 796-residue polypeptide: Molybdenum cofactor sulfurase (796 aa).

Position 246 is an N6-(pyridoxal phosphate)lysine (Lys-246). Cys-418 is an active-site residue. The MOSC domain occupies 650-796 (LRLLRQSSQR…LTCGDVVVVT (147 aa)). Ser-752 is subject to Phosphoserine.

It belongs to the class-V pyridoxal-phosphate-dependent aminotransferase family. MOCOS subfamily. Requires pyridoxal 5'-phosphate as cofactor.

It carries out the reaction Mo-molybdopterin + L-cysteine + AH2 = thio-Mo-molybdopterin + L-alanine + A + H2O. Functionally, sulfurates the molybdenum cofactor. Sulfation of molybdenum is essential for xanthine dehydrogenase (XDH) and aldehyde oxidase (ADO) enzymes in which molybdenum cofactor is liganded by 1 oxygen and 1 sulfur atom in active form. The sequence is that of Molybdenum cofactor sulfurase from Drosophila persimilis (Fruit fly).